We begin with the raw amino-acid sequence, 395 residues long: MKLLGKYVDKGMQGNVTLVPEESEDMWHAYNLIAKGDSVRSTTIRKVQNETATGSSTSSRVRTTLTIAVESIDFDTQACVLRLKGRNIEENQYVKMGAYHTLDLELNRKFELRKPEWDTIALERIEMACDPTQSADVAAVVMQEGLAHVCLITASMTLVRSKIEVSIPRKRKGSVQQHEKGLAKFYEQVMQSILRHVNFDVVKCVLIASPGFVRDQFYDYMFQQAVKMDYKLLLDNKSKFMLVHASSGFKHSLREILQDPAVLAKMSDTKAAGEVKALEQFYMMLQCEPAKAFYGKKHVLQAAESQAIETLLISDNLFRCQDVSLRKEYVNLVESIRDAGGEVKIFSSMHISGEQLAQLTGIAALLRFPMPELEDSDDDDDEDGAAGGVADSDSD.

A PGF motif motif is present at residues 210 to 212; it reads PGF. A disordered region spans residues 371 to 395; sequence PELEDSDDDDDEDGAAGGVADSDSD. A compositionally biased stretch (acidic residues) spans 372–384; that stretch reads ELEDSDDDDDEDG.

Belongs to the eukaryotic release factor 1 family. Pelota subfamily. Component of the Pelota-HBS1L complex, also named Dom34-Hbs1 complex, composed of pelo and HBS1. Interacts with Pink1 and Cnot4; the interaction with Cnot4 appears to be Pink1-dependent. The cofactor is a divalent metal cation. In terms of tissue distribution, expressed in ovaries and muscles (at protein level). Expressed throughout all development stages.

It is found in the nucleus. It localises to the cytoplasm. In terms of biological role, component of the Pelota-HBS1L complex, a complex that recognizes stalled ribosomes and triggers the No-Go Decay (NGD) pathway. In the Pelota-HBS1L complex, pelo recognizes ribosomes stalled at the 3' end of an mRNA and engages stalled ribosomes by destabilizing mRNA in the mRNA channel. Following ribosome-binding, the Pelota-HBS1L complex promotes recruitment of pix, which drives the disassembly of stalled ribosomes, followed by degradation of damaged mRNAs as part of the NGD pathway. Required prior to the first meiotic division for spindle formation and nuclear envelope breakdown during spermatogenesis. Together with HBS1, promotes spermatid individualization during spermatogenesis. Required for ovarian germ line stem cell self-renewal and oocyte development during oogenesis. Together with HSB1, required for transposon silencing in the ovary and testis. As part of the Pink1-regulated signaling, is recruited to damaged mitochondrial and is required for recruitment of autophagy receptors and induction of mitophagy. Required for normal eye patterning and for mitotic divisions in the ovary. This Drosophila melanogaster (Fruit fly) protein is Protein pelota (pelo).